A 259-amino-acid chain; its full sequence is Phosphoribosylaminoimidazole-succinocarboxamide synthase (259 aa).

Belongs to the SAICAR synthetase family.

The enzyme catalyses 5-amino-1-(5-phospho-D-ribosyl)imidazole-4-carboxylate + L-aspartate + ATP = (2S)-2-[5-amino-1-(5-phospho-beta-D-ribosyl)imidazole-4-carboxamido]succinate + ADP + phosphate + 2 H(+). It participates in purine metabolism; IMP biosynthesis via de novo pathway; 5-amino-1-(5-phospho-D-ribosyl)imidazole-4-carboxamide from 5-amino-1-(5-phospho-D-ribosyl)imidazole-4-carboxylate: step 1/2. The polypeptide is Phosphoribosylaminoimidazole-succinocarboxamide synthase (Hyphomonas neptunium (strain ATCC 15444)).